We begin with the raw amino-acid sequence, 403 residues long: MEQIPFVSSSPNTLGIELELQLIDPAGFDLAAASDELLAQLANHPVADRIKPEITRSMIELNSSVHEHPAGLLAEMREMRDALCEAADAVGVSVSGGGTHPFMRWQERTISDTPRFQYLAEMYGYLARQFTVFGQHIHLGVPSGDAAVRLVHGLSPYVPHFIALSASSPYREGVDTLFSCARLNAVNSFPLAGHLPPEVADWYHFEAHIAQLRASGLAESIKDLYWDIRPKPEFGTVEIRVCDTPLTVERACQLAAFAQALAVLLEREPSPPTQAWLAYRSNHFQACRFGLHGSYVTPGGQRVRLADHLKALFVRLMPVAEELGTTDILQSLRDEMQRGGNDARWLRAQFHRTRELSGTVEAMTQVFRGESAAQRRAPQAARRRIRASSEPLGPMSMWPERLH.

Residues 370 to 403 (ESAAQRRAPQAARRRIRASSEPLGPMSMWPERLH) form a disordered region.

This sequence belongs to the glutamate--cysteine ligase type 2 family. YbdK subfamily.

The enzyme catalyses L-cysteine + L-glutamate + ATP = gamma-L-glutamyl-L-cysteine + ADP + phosphate + H(+). Functionally, ATP-dependent carboxylate-amine ligase which exhibits weak glutamate--cysteine ligase activity. The sequence is that of Putative glutamate--cysteine ligase 2 from Bordetella avium (strain 197N).